The following is a 291-amino-acid chain: Nitrogenase iron protein 1 (291 aa).

10 to 17 (GKGGIGKS) serves as a coordination point for ATP. Residue C98 participates in [4Fe-4S] cluster binding. R101 carries the post-translational modification ADP-ribosylarginine; by dinitrogenase reductase ADP-ribosyltransferase. C133 provides a ligand contact to [4Fe-4S] cluster.

This sequence belongs to the NifH/BchL/ChlL family. Homodimer. [4Fe-4S] cluster serves as cofactor. In terms of processing, the reversible ADP-ribosylation of Arg-101 inactivates the nitrogenase reductase and regulates nitrogenase activity.

The enzyme catalyses N2 + 8 reduced [2Fe-2S]-[ferredoxin] + 16 ATP + 16 H2O = H2 + 8 oxidized [2Fe-2S]-[ferredoxin] + 2 NH4(+) + 16 ADP + 16 phosphate + 6 H(+). The key enzymatic reactions in nitrogen fixation are catalyzed by the nitrogenase complex, which has 2 components: the iron protein (component 2) and a component 1 which is either a molybdenum-iron protein, a vanadium-iron, or an iron-iron protein. This Azotobacter chroococcum mcd 1 protein is Nitrogenase iron protein 1 (nifH1).